Reading from the N-terminus, the 279-residue chain is Bifunctional protein FolD (279 aa).

NADP(+)-binding positions include 164–166, Ser-189, and Ile-230; that span reads GRS.

The protein belongs to the tetrahydrofolate dehydrogenase/cyclohydrolase family. In terms of assembly, homodimer.

The catalysed reaction is (6R)-5,10-methylene-5,6,7,8-tetrahydrofolate + NADP(+) = (6R)-5,10-methenyltetrahydrofolate + NADPH. It carries out the reaction (6R)-5,10-methenyltetrahydrofolate + H2O = (6R)-10-formyltetrahydrofolate + H(+). The protein operates within one-carbon metabolism; tetrahydrofolate interconversion. In terms of biological role, catalyzes the oxidation of 5,10-methylenetetrahydrofolate to 5,10-methenyltetrahydrofolate and then the hydrolysis of 5,10-methenyltetrahydrofolate to 10-formyltetrahydrofolate. This Agathobacter rectalis (strain ATCC 33656 / DSM 3377 / JCM 17463 / KCTC 5835 / VPI 0990) (Eubacterium rectale) protein is Bifunctional protein FolD.